Here is a 359-residue protein sequence, read N- to C-terminus: Peptide chain release factor 1 (359 aa).

Gln-236 carries the post-translational modification N5-methylglutamine.

Belongs to the prokaryotic/mitochondrial release factor family. Post-translationally, methylated by PrmC. Methylation increases the termination efficiency of RF1.

The protein resides in the cytoplasm. In terms of biological role, peptide chain release factor 1 directs the termination of translation in response to the peptide chain termination codons UAG and UAA. This is Peptide chain release factor 1 from Streptococcus agalactiae serotype V (strain ATCC BAA-611 / 2603 V/R).